The sequence spans 329 residues: Alpha/beta hydrolase domain-containing protein 17C (329 aa).

The disordered stretch occupies residues 46 to 85 (APEQRGPGAPAPASAASTSSASAAAQPAPQQPEEGGAGPG). Residues 51-79 (GPGAPAPASAASTSSASAAAQPAPQQPEE) are compositionally biased toward low complexity. Active-site charge relay system residues include Ser-211, Asp-276, and His-305.

Belongs to the AB hydrolase superfamily. ABHD17 family. In terms of processing, palmitoylated on cysteine residues located in a cysteine cluster at the N-terminus which promotes membrane localization. Palmitoylation is required for post-synaptic localization and for depalmitoylating activity towards DLG4/PSD95.

The protein localises to the recycling endosome membrane. It is found in the cell projection. It localises to the dendritic spine. Its subcellular location is the postsynaptic density membrane. It carries out the reaction S-hexadecanoyl-L-cysteinyl-[protein] + H2O = L-cysteinyl-[protein] + hexadecanoate + H(+). Hydrolyzes fatty acids from S-acylated cysteine residues in proteins. Has depalmitoylating activity towards NRAS and DLG4/PSD95. The protein is Alpha/beta hydrolase domain-containing protein 17C of Bos taurus (Bovine).